The chain runs to 477 residues: Dihydrolipoyl dehydrogenase 3 (477 aa).

Residues 39–47, lysine 56, and alanine 118 each bind FAD; that span reads EKGEYGGAC. Cysteines 47 and 52 form a disulfide. NAD(+)-binding positions include 186–190, glutamate 209, and 279–282; these read GAGYI and AVGR. FAD is bound by residues aspartate 322 and alanine 330. The active-site Proton acceptor is histidine 454.

This sequence belongs to the class-I pyridine nucleotide-disulfide oxidoreductase family. Homodimer. It depends on FAD as a cofactor.

It is found in the cytoplasm. The catalysed reaction is N(6)-[(R)-dihydrolipoyl]-L-lysyl-[protein] + NAD(+) = N(6)-[(R)-lipoyl]-L-lysyl-[protein] + NADH + H(+). The sequence is that of Dihydrolipoyl dehydrogenase 3 (lpdA3) from Haloarcula marismortui (strain ATCC 43049 / DSM 3752 / JCM 8966 / VKM B-1809) (Halobacterium marismortui).